We begin with the raw amino-acid sequence, 183 residues long: Pyruvoyl-dependent arginine decarboxylase 2 (183 aa).

S41 is modified (pyruvic acid (Ser)).

Belongs to the PdaD family. It depends on pyruvate as a cofactor.

It catalyses the reaction L-arginine + H(+) = agmatine + CO2. The polypeptide is Pyruvoyl-dependent arginine decarboxylase 2 (pdaD2) (Methanosarcina acetivorans (strain ATCC 35395 / DSM 2834 / JCM 12185 / C2A)).